A 342-amino-acid chain; its full sequence is Isopentenyl-diphosphate delta-isomerase (342 aa).

11-12 contributes to the substrate binding site; that stretch reads RK. FMN contacts are provided by residues Ser68, 69 to 71, Ser99, and Asn127; that span reads SMT. 99–101 contributes to the substrate binding site; that stretch reads SMR. Gln162 lines the substrate pocket. Glu163 is a Mg(2+) binding site. Residues Lys194, Thr224, 274-276, and 295-296 contribute to the FMN site; these read GLK and AG.

Belongs to the IPP isomerase type 2 family. Homooctamer. Dimer of tetramers. The cofactor is FMN. NADPH is required as a cofactor. Mg(2+) serves as cofactor.

The protein localises to the cytoplasm. The catalysed reaction is isopentenyl diphosphate = dimethylallyl diphosphate. Functionally, involved in the biosynthesis of isoprenoids. Catalyzes the 1,3-allylic rearrangement of the homoallylic substrate isopentenyl (IPP) to its allylic isomer, dimethylallyl diphosphate (DMAPP). This chain is Isopentenyl-diphosphate delta-isomerase, found in Rickettsia akari (strain Hartford).